Consider the following 142-residue polypeptide: MFQGSSALTLDAKGRISIPTRHRDALMDRAEGRLTLTRHPDGCLLVYPRPEWEEKRAQIAAFPMSARALQRLLLGNAQDVDIDGSGRVLIAPELRNASGMTRDVMLLGMGAHFELWDAASLARREAEDLAQGMPDVLNQFSF.

SpoVT-AbrB domains lie at 5–51 and 77–120; these read SSAL…PRPE and AQDV…DAAS.

Belongs to the MraZ family. Forms oligomers.

The protein localises to the cytoplasm. Its subcellular location is the nucleoid. The sequence is that of Transcriptional regulator MraZ from Bordetella bronchiseptica (strain ATCC BAA-588 / NCTC 13252 / RB50) (Alcaligenes bronchisepticus).